The following is a 277-amino-acid chain: 2-dehydro-3-deoxyphosphooctonate aldolase (277 aa).

The protein belongs to the KdsA family.

The protein resides in the cytoplasm. The enzyme catalyses D-arabinose 5-phosphate + phosphoenolpyruvate + H2O = 3-deoxy-alpha-D-manno-2-octulosonate-8-phosphate + phosphate. It functions in the pathway carbohydrate biosynthesis; 3-deoxy-D-manno-octulosonate biosynthesis; 3-deoxy-D-manno-octulosonate from D-ribulose 5-phosphate: step 2/3. Its pathway is bacterial outer membrane biogenesis; lipopolysaccharide biosynthesis. This chain is 2-dehydro-3-deoxyphosphooctonate aldolase, found in Brucella melitensis biotype 2 (strain ATCC 23457).